The sequence spans 146 residues: 3-hydroxyacyl-[acyl-carrier-protein] dehydratase FabZ (146 aa).

The active site involves histidine 49.

This sequence belongs to the thioester dehydratase family. FabZ subfamily.

It localises to the cytoplasm. The catalysed reaction is a (3R)-hydroxyacyl-[ACP] = a (2E)-enoyl-[ACP] + H2O. Functionally, involved in unsaturated fatty acids biosynthesis. Catalyzes the dehydration of short chain beta-hydroxyacyl-ACPs and long chain saturated and unsaturated beta-hydroxyacyl-ACPs. The protein is 3-hydroxyacyl-[acyl-carrier-protein] dehydratase FabZ of Pseudomonas entomophila (strain L48).